An 813-amino-acid polypeptide reads, in one-letter code: Ribonuclease R (813 aa).

The region spanning 260 to 587 is the RNB domain; it reads RVDLRDLPLV…LHRAIKYLLA (328 aa). At lysine 544 the chain carries N6-acetyllysine. Residues 644-725 enclose the S1 motif domain; it reads GNVFKGVISS…DERKIDFSLI (82 aa). The segment at 733 to 813 is disordered; it reads NVGKTAREKA…KRAAKKKVAE (81 aa). Basic and acidic residues-rich tracts occupy residues 737–749 and 761–774; these read TARE…DAGK and VNFE…GEKK. Residues 775–791 show a composition bias toward basic residues; sequence TKPKAAKKDARKAKKPS. Low complexity predominate over residues 792–801; that stretch reads AKTQKIAAAT. A compositionally biased stretch (basic residues) spans 802–813; it reads KAKRAAKKKVAE.

This sequence belongs to the RNR ribonuclease family. RNase R subfamily. In terms of assembly, monomer.

The protein resides in the cytoplasm. The enzyme catalyses Exonucleolytic cleavage in the 3'- to 5'-direction to yield nucleoside 5'-phosphates.. 3'-5' exoribonuclease that releases 5'-nucleoside monophosphates and is involved in maturation of structured RNAs. Required for the expression of virulence genes on the large plasmid of S.flexneri at the post-transcriptional level. The protein is Ribonuclease R of Shigella flexneri.